The primary structure comprises 72 residues: Translation initiation factor IF-1 (72 aa).

Residues 1–72 (MARDDVIEVD…DRGRITFRYK (72 aa)) form the S1-like domain.

It belongs to the IF-1 family. As to quaternary structure, component of the 30S ribosomal translation pre-initiation complex which assembles on the 30S ribosome in the order IF-2 and IF-3, IF-1 and N-formylmethionyl-tRNA(fMet); mRNA recruitment can occur at any time during PIC assembly.

The protein localises to the cytoplasm. One of the essential components for the initiation of protein synthesis. Stabilizes the binding of IF-2 and IF-3 on the 30S subunit to which N-formylmethionyl-tRNA(fMet) subsequently binds. Helps modulate mRNA selection, yielding the 30S pre-initiation complex (PIC). Upon addition of the 50S ribosomal subunit IF-1, IF-2 and IF-3 are released leaving the mature 70S translation initiation complex. The protein is Translation initiation factor IF-1 of Helicobacter acinonychis (strain Sheeba).